The primary structure comprises 179 residues: ATP-dependent protease subunit HslV (179 aa).

T7 is a catalytic residue. Na(+) contacts are provided by G162, C165, and T168.

Belongs to the peptidase T1B family. HslV subfamily. A double ring-shaped homohexamer of HslV is capped on each side by a ring-shaped HslU homohexamer. The assembly of the HslU/HslV complex is dependent on binding of ATP.

The protein resides in the cytoplasm. It catalyses the reaction ATP-dependent cleavage of peptide bonds with broad specificity.. Allosterically activated by HslU binding. Protease subunit of a proteasome-like degradation complex believed to be a general protein degrading machinery. The protein is ATP-dependent protease subunit HslV of Saccharophagus degradans (strain 2-40 / ATCC 43961 / DSM 17024).